The sequence spans 273 residues: Small ribosomal subunit protein uS2 (273 aa).

Positions 244–273 are disordered; the sequence is SDEEANSSAEENENRQEDLLAKKYDSSEAN. Positions 255–273 are enriched in basic and acidic residues; it reads NENRQEDLLAKKYDSSEAN.

The protein belongs to the universal ribosomal protein uS2 family.

This is Small ribosomal subunit protein uS2 from Chlamydia felis (strain Fe/C-56) (Chlamydophila felis).